A 563-amino-acid chain; its full sequence is NAD-dependent malic enzyme (563 aa).

Catalysis depends on tyrosine 101, which acts as the Proton donor. Arginine 154 lines the NAD(+) pocket. Residue lysine 172 is the Proton acceptor of the active site. A divalent metal cation is bound by residues glutamate 243, aspartate 244, and aspartate 267. NAD(+) contacts are provided by aspartate 267 and asparagine 416.

This sequence belongs to the malic enzymes family. As to quaternary structure, homotetramer. Requires Mg(2+) as cofactor. It depends on Mn(2+) as a cofactor.

The enzyme catalyses (S)-malate + NAD(+) = pyruvate + CO2 + NADH. It carries out the reaction oxaloacetate + H(+) = pyruvate + CO2. The sequence is that of NAD-dependent malic enzyme from Pseudomonas savastanoi pv. phaseolicola (strain 1448A / Race 6) (Pseudomonas syringae pv. phaseolicola (strain 1448A / Race 6)).